Reading from the N-terminus, the 431-residue chain is Arginine biosynthesis bifunctional protein ArgJ, mitochondrial (431 aa).

Substrate-binding residues include Thr174, Lys200, Thr211, Glu297, Asn426, and Thr431. Thr211 (nucleophile) is an active-site residue.

The protein belongs to the ArgJ family. Heterodimer of an alpha and a beta chain. Post-translationally, the alpha and beta chains are autoproteolytically processed from a single precursor protein within the mitochondrion.

The protein resides in the mitochondrion matrix. The catalysed reaction is N(2)-acetyl-L-ornithine + L-glutamate = N-acetyl-L-glutamate + L-ornithine. It catalyses the reaction L-glutamate + acetyl-CoA = N-acetyl-L-glutamate + CoA + H(+). Its pathway is amino-acid biosynthesis; L-arginine biosynthesis; L-ornithine and N-acetyl-L-glutamate from L-glutamate and N(2)-acetyl-L-ornithine (cyclic): step 1/1. The protein operates within amino-acid biosynthesis; L-arginine biosynthesis; N(2)-acetyl-L-ornithine from L-glutamate: step 1/4. In terms of biological role, catalyzes two activities which are involved in the cyclic version of arginine biosynthesis: the synthesis of acetylglutamate from glutamate and acetyl-CoA, and of ornithine by transacetylation between acetylornithine and glutamate. This Yarrowia lipolytica (strain CLIB 122 / E 150) (Yeast) protein is Arginine biosynthesis bifunctional protein ArgJ, mitochondrial.